Consider the following 337-residue polypeptide: DNA-directed RNA polymerase subunit alpha (337 aa).

Residues 1-233 (MVREKVTVST…DLFIPFLHME (233 aa)) form an alpha N-terminal domain (alpha-NTD) region. Residues 265–337 (KKIALKSIFI…FVIDLAKNKF (73 aa)) are alpha C-terminal domain (alpha-CTD).

The protein belongs to the RNA polymerase alpha chain family. As to quaternary structure, in plastids the minimal PEP RNA polymerase catalytic core is composed of four subunits: alpha, beta, beta', and beta''. When a (nuclear-encoded) sigma factor is associated with the core the holoenzyme is formed, which can initiate transcription.

Its subcellular location is the plastid. It localises to the chloroplast. The catalysed reaction is RNA(n) + a ribonucleoside 5'-triphosphate = RNA(n+1) + diphosphate. Functionally, DNA-dependent RNA polymerase catalyzes the transcription of DNA into RNA using the four ribonucleoside triphosphates as substrates. The polypeptide is DNA-directed RNA polymerase subunit alpha (Nicotiana sylvestris (Wood tobacco)).